The sequence spans 480 residues: Methylenetetrahydrofolate--tRNA-(uracil-5-)-methyltransferase TrmFO (480 aa).

15-20 (GGGLAG) serves as a coordination point for FAD.

It belongs to the MnmG family. TrmFO subfamily. FAD serves as cofactor.

Its subcellular location is the cytoplasm. The catalysed reaction is uridine(54) in tRNA + (6R)-5,10-methylene-5,6,7,8-tetrahydrofolate + NADH + H(+) = 5-methyluridine(54) in tRNA + (6S)-5,6,7,8-tetrahydrofolate + NAD(+). It catalyses the reaction uridine(54) in tRNA + (6R)-5,10-methylene-5,6,7,8-tetrahydrofolate + NADPH + H(+) = 5-methyluridine(54) in tRNA + (6S)-5,6,7,8-tetrahydrofolate + NADP(+). Its function is as follows. Catalyzes the folate-dependent formation of 5-methyl-uridine at position 54 (M-5-U54) in all tRNAs. This chain is Methylenetetrahydrofolate--tRNA-(uracil-5-)-methyltransferase TrmFO, found in Caulobacter sp. (strain K31).